We begin with the raw amino-acid sequence, 177 residues long: Dual-action ribosomal maturation protein DarP (177 aa).

The protein belongs to the DarP family.

Its subcellular location is the cytoplasm. Functionally, member of a network of 50S ribosomal subunit biogenesis factors which assembles along the 30S-50S interface, preventing incorrect 23S rRNA structures from forming. Promotes peptidyl transferase center (PTC) maturation. This chain is Dual-action ribosomal maturation protein DarP, found in Histophilus somni (strain 129Pt) (Haemophilus somnus).